A 625-amino-acid polypeptide reads, in one-letter code: tRNA uridine 5-carboxymethylaminomethyl modification enzyme MnmG (625 aa).

Residues 16-21 (GGGHAG), Ile128, and Ser183 each bind FAD. 275–289 (GPRYCPSIEDKVVRF) lines the NAD(+) pocket. Gln372 lines the FAD pocket.

Belongs to the MnmG family. As to quaternary structure, homodimer. Heterotetramer of two MnmE and two MnmG subunits. The cofactor is FAD.

It localises to the cytoplasm. Its function is as follows. NAD-binding protein involved in the addition of a carboxymethylaminomethyl (cmnm) group at the wobble position (U34) of certain tRNAs, forming tRNA-cmnm(5)s(2)U34. The chain is tRNA uridine 5-carboxymethylaminomethyl modification enzyme MnmG from Protochlamydia amoebophila (strain UWE25).